Consider the following 111-residue polypeptide: uncharacterized protein (111 aa).

Positions 3–29 (RKITSYKTSLQGLREENEDVELMNLNL) form a coiled coil. The 106-residue stretch at 6-111 (TSYKTSLQGL…TWWMYCSSYY (106 aa)) folds into the PPM-type phosphatase domain.

This is an uncharacterized protein from Acanthamoeba polyphaga mimivirus (APMV).